A 288-amino-acid polypeptide reads, in one-letter code: ATP synthase gamma chain (288 aa).

Belongs to the ATPase gamma chain family. In terms of assembly, F-type ATPases have 2 components, CF(1) - the catalytic core - and CF(0) - the membrane proton channel. CF(1) has five subunits: alpha(3), beta(3), gamma(1), delta(1), epsilon(1). CF(0) has three main subunits: a, b and c.

The protein localises to the cell inner membrane. Its function is as follows. Produces ATP from ADP in the presence of a proton gradient across the membrane. The gamma chain is believed to be important in regulating ATPase activity and the flow of protons through the CF(0) complex. This Blochmanniella floridana protein is ATP synthase gamma chain.